The following is a 356-amino-acid chain: Activating signal cointegrator 1 complex subunit 1 (356 aa).

Residues 1 to 52 form a required for interaction with ASCC3 region; the sequence is MDVLRPQIVTFDGRNYRKNPIQEKQYQHEEDEDFYPDSMEYSDEPCGAYEVA. Positions 57–119 constitute a KH domain; that stretch reads GFRATVSAPS…NGVVSARTRI (63 aa).

Identified in the ASCC complex that contains ASCC1, ASCC2 and ASCC3. Interacts directly with ASCC3. The ASCC complex interacts with ALKBH3. Part of the ASC-1 complex, that contains TRIP4, ASCC1, ASCC2 and ASCC3. Interacts with CSRP1. Interacts with ZCCHC4. In terms of tissue distribution, expressed in the spinal cord, brain, paraspinal ganglia, thyroid, and submandibular glands.

It localises to the nucleus. The protein localises to the nucleus speckle. Functionally, plays a role in DNA damage repair as component of the ASCC complex. Part of the ASC-1 complex that enhances NF-kappa-B, SRF and AP1 transactivation. In cells responding to gastrin-activated paracrine signals, it is involved in the induction of SERPINB2 expression by gastrin. May also play a role in the development of neuromuscular junction. The sequence is that of Activating signal cointegrator 1 complex subunit 1 (Ascc1) from Mus musculus (Mouse).